Here is a 96-residue protein sequence, read N- to C-terminus: Small ribosomal subunit protein bS21 (96 aa).

The span at Glu37 to Arg52 shows a compositional bias: basic and acidic residues. The disordered stretch occupies residues Glu37–Arg96. Residues Arg53–Leu62 show a composition bias toward basic residues.

This sequence belongs to the bacterial ribosomal protein bS21 family.

The chain is Small ribosomal subunit protein bS21 from Afipia carboxidovorans (strain ATCC 49405 / DSM 1227 / KCTC 32145 / OM5) (Oligotropha carboxidovorans).